The primary structure comprises 384 residues: L-aspartate decarboxylase (384 aa).

Lys-231 carries the N6-(pyridoxal phosphate)lysine modification.

The protein belongs to the group II decarboxylase family. MfnA subfamily. Homodimer. Can also form homohexamers. The cofactor is pyridoxal 5'-phosphate.

The catalysed reaction is L-aspartate + H(+) = beta-alanine + CO2. Its pathway is cofactor biosynthesis; coenzyme A biosynthesis. With respect to regulation, inhibited by hydroxylamine. Its function is as follows. Catalyzes the decarboxylation of L-aspartate to produce beta-alanine. In vitro, can also catalyze the decarboxylation of L-glutamate to produce 4-aminobutanoate, but this activity does not seem necessary in vivo. Shows much higher activity with L-aspartate than with L-glutamate. Does not decarboxylate L-tyrosine. The polypeptide is L-aspartate decarboxylase (Thermococcus kodakarensis (strain ATCC BAA-918 / JCM 12380 / KOD1) (Pyrococcus kodakaraensis (strain KOD1))).